The sequence spans 386 residues: ATP synthase gamma chain 2, chloroplastic (386 aa).

The disordered stretch occupies residues 1–22; sequence MTGSISTSWLLSSPSNSNSASS. A chloroplast-targeting transit peptide spans 1–60; it reads MTGSISTSWLLSSPSNSNSASSSESYSFIATLKPVRYYPFQSLTPNRISSRSPLPSIQIR. Residue C149 is part of the active site. Residues C260 and C266 are joined by a disulfide bond.

Belongs to the ATPase gamma chain family. F-type ATPases have 2 components, CF(1) - the catalytic core - and CF(0) - the membrane proton channel. CF(1) has five subunits: alpha(3), beta(3), gamma(1), delta(1), epsilon(1). CF(0) has four main subunits: a, b, b' and c.

It is found in the plastid. The protein resides in the chloroplast thylakoid membrane. In terms of biological role, produces ATP from ADP in the presence of a proton gradient across the membrane. The gamma chain is believed to be important in regulating ATPase activity and the flow of protons through the CF(0) complex. In Arabidopsis thaliana (Mouse-ear cress), this protein is ATP synthase gamma chain 2, chloroplastic (ATPC2).